The primary structure comprises 397 residues: Acetyl-CoA acetyltransferase (397 aa).

The active-site Acyl-thioester intermediate is the Cys-95. Positions 187 and 230 each coordinate CoA. K(+) is bound at residue Tyr-187. The K(+) site is built by Ala-246, Gly-247, and Ala-249. Ser-250 serves as a coordination point for CoA. A K(+)-binding site is contributed by Val-347. Active-site proton acceptor residues include His-351 and Cys-379.

It belongs to the thiolase-like superfamily. Thiolase family.

The protein localises to the peroxisome. The enzyme catalyses 2 acetyl-CoA = acetoacetyl-CoA + CoA. Essential for n-decane utilization. The polypeptide is Acetyl-CoA acetyltransferase (PAT1) (Yarrowia lipolytica (strain CLIB 122 / E 150) (Yeast)).